The sequence spans 299 residues: GTPase Era (299 aa).

Positions 4–171 (KSGFVAILGR…VDILSENLDE (168 aa)) constitute an Era-type G domain. Residues 12–19 (GRPNVGKS) are G1. 12–19 (GRPNVGKS) provides a ligand contact to GTP. Positions 38–42 (QTTRN) are G2. Residues 59-62 (DTPG) are G3. Residues 59-63 (DTPGI) and 121-124 (NKID) contribute to the GTP site. Residues 121–124 (NKID) are G4. A G5 region spans residues 150–152 (ISA). The region spanning 202 to 280 (TREEIPHSVA…FLETWVKVKK (79 aa)) is the KH type-2 domain.

The protein belongs to the TRAFAC class TrmE-Era-EngA-EngB-Septin-like GTPase superfamily. Era GTPase family. In terms of assembly, monomer.

It localises to the cytoplasm. The protein localises to the cell membrane. Its function is as follows. An essential GTPase that binds both GDP and GTP, with rapid nucleotide exchange. Plays a role in 16S rRNA processing and 30S ribosomal subunit biogenesis and possibly also in cell cycle regulation and energy metabolism. The polypeptide is GTPase Era (Streptococcus pneumoniae (strain Hungary19A-6)).